A 96-amino-acid polypeptide reads, in one-letter code: Glutamyl-tRNA(Gln) amidotransferase subunit C (96 aa).

The protein belongs to the GatC family. As to quaternary structure, heterotrimer of A, B and C subunits.

It carries out the reaction L-glutamyl-tRNA(Gln) + L-glutamine + ATP + H2O = L-glutaminyl-tRNA(Gln) + L-glutamate + ADP + phosphate + H(+). The catalysed reaction is L-aspartyl-tRNA(Asn) + L-glutamine + ATP + H2O = L-asparaginyl-tRNA(Asn) + L-glutamate + ADP + phosphate + 2 H(+). Allows the formation of correctly charged Asn-tRNA(Asn) or Gln-tRNA(Gln) through the transamidation of misacylated Asp-tRNA(Asn) or Glu-tRNA(Gln) in organisms which lack either or both of asparaginyl-tRNA or glutaminyl-tRNA synthetases. The reaction takes place in the presence of glutamine and ATP through an activated phospho-Asp-tRNA(Asn) or phospho-Glu-tRNA(Gln). The sequence is that of Glutamyl-tRNA(Gln) amidotransferase subunit C from Neisseria meningitidis serogroup B (strain ATCC BAA-335 / MC58).